Consider the following 356-residue polypeptide: MGSCQSNENSEGNARNKEIEKQLNADKRAGSSIVKLLLLGAGECGKSTVLKQMQILHSNGFTEEEVNEKRAIVYNNTVSAMCTILRAMDGVLHLPLENGQKEAEKAIVMKVQENGEEGEALTEEVSRAIQSLWADPGVKKAFEMRSEYQLPDSAKYFLDNCQRISEPGYRPNDQDILYSRVATTGVVEVKFKIKELDFRVFDVGGQRSERRKWIHCFDNVESIIFITAISEYDQVLFEDETTNRMIESMQLFNSICNSTWFLSTAMILFMNKKDLFMEKIQRVNITTAFPDYEGGQNYEEAVAFIKQKFAELNLNPDKKTIYMHETCATDTNQVQLVISSVIDTIIQKNLQKAGMM.

Gly2 is lipidated: N-myristoyl glycine. Cys4 carries the S-palmitoyl cysteine lipid modification. In terms of domain architecture, G-alpha spans 32–356 (SIVKLLLLGA…QKNLQKAGMM (325 aa)). Positions 35-48 (KLLLLGAGECGKST) are G1 motif. GTP-binding positions include 40 to 47 (GAGECGKS), 177 to 183 (LYSRVAT), 202 to 206 (DVGGQ), 271 to 274 (NKKD), and Ala328. Mg(2+) is bound by residues Ser47 and Thr183. Positions 175-183 (DILYSRVAT) are G2 motif. The G3 motif stretch occupies residues 198 to 207 (FRVFDVGGQR). Positions 267–274 (ILFMNKKD) are G4 motif. The segment at 326 to 331 (TCATDT) is G5 motif.

The protein belongs to the G-alpha family. As to quaternary structure, g proteins are composed of 3 units; alpha, beta and gamma. The alpha chain contains the guanine nucleotide binding site.

The protein resides in the cell projection. Its subcellular location is the cilium. The protein localises to the dendrite. In terms of biological role, guanine nucleotide-binding proteins (G proteins) are involved as modulators or transducers in various transmembrane signaling systems. This specific G-alpha subunit plays an important role in olfaction and in cilia morphogenesis. Involved in chemotactic responses to attractants diacetyl, pyrazine, 2,4,5-trimethylthiazole, benzaldehyde, isoamyl alcohol, butanone and 2,3-pentanedione. Displays a redundant function with gpa-3 in chemotactic responses. Involved in avoidance responses to copper, sodium dodecyl sulfate and linoleic acid. Involved in osmotic avoidance and mechanosensory responses. Involved in specifying fan-like morphology of cilia of head sensory neurons AWC. The sequence is that of Guanine nucleotide-binding protein alpha-17 subunit (odr-3) from Caenorhabditis briggsae.